A 469-amino-acid chain; its full sequence is UTP--glucose-1-phosphate uridylyltransferase 2 (469 aa).

Ala-2 carries the post-translational modification N-acetylalanine. UTP is bound by residues 85 to 88 (LNGG), Lys-99, Gln-162, and Gly-191. Residue 87–88 (GG) participates in substrate binding. Substrate contacts are provided by residues His-192 and 220-222 (NSD). Asp-222 and Lys-360 together coordinate UTP.

The protein belongs to the UDPGP type 1 family. Expressed in cauline leaves, flowers and siliques.

It localises to the cytoplasm. It carries out the reaction alpha-D-glucose 1-phosphate + UTP + H(+) = UDP-alpha-D-glucose + diphosphate. Its function is as follows. Converts glucose 1-phosphate to UDP-glucose, which is the major glycosyl donor for polysaccharides. Acts redundantly with UGP1 and is essential for the synthesis of sucrose, starch and cell wall, and callose deposition. The polypeptide is UTP--glucose-1-phosphate uridylyltransferase 2 (Arabidopsis thaliana (Mouse-ear cress)).